A 359-amino-acid chain; its full sequence is Hereditary hemochromatosis protein homolog (359 aa).

A signal peptide spans 1–24 (MSLSAGLPVRPLLLLLLLLWSVAP). Residues 25–126 (QALPPRSHSL…KVTKLGVVSE (102 aa)) form an alpha-1 region. Residues 25 to 318 (QALPPRSHSL…WEPLQSQAMI (294 aa)) lie on the Extracellular side of the membrane. Residues Asn-114, Asn-142, Asn-166, and Asn-246 are each glycosylated (N-linked (GlcNAc...) asparagine). The interval 127–217 (SHILQVVLGC…ELGRGVLGQQ (91 aa)) is alpha-2. Cystine bridges form between Cys-136–Cys-199 and Cys-237–Cys-294. The tract at residues 218–309 (VPTLVKVTRH…GLDQPLTASW (92 aa)) is alpha-3. In terms of domain architecture, Ig-like C1-type spans 219 to 308 (PTLVKVTRHW…PGLDQPLTAS (90 aa)). Residues 310 to 318 (EPLQSQAMI) form a connecting peptide region. Residues 319 to 339 (IGIISGVTVCAIFLVGILFLI) traverse the membrane as a helical segment. Topologically, residues 340 to 359 (LRKRKASGGTMGGYVLTDCE) are cytoplasmic.

The protein belongs to the MHC class I family. As to quaternary structure, binds TFR through the extracellular domain in a pH-dependent manner.

The protein localises to the cell membrane. Binds to transferrin receptor (TFR) and reduces its affinity for iron-loaded transferrin. The polypeptide is Hereditary hemochromatosis protein homolog (Hfe) (Mus musculus (Mouse)).